Consider the following 149-residue polypeptide: Transthyretin (149 aa).

The first 22 residues, 1-22 (MAFHSLLLLCLAGLAFVSETAA), serve as a signal peptide directing secretion. Cys-32 carries the post-translational modification Sulfocysteine. Position 37 (Lys-37) interacts with L-thyroxine. The residue at position 64 (Glu-64) is a 4-carboxyglutamate. L-thyroxine is bound by residues Glu-76 and Ser-139.

It belongs to the transthyretin family. As to quaternary structure, homotetramer. Dimer of dimers. In the homotetramer, subunits assemble around a central channel that can accommodate two ligand molecules. Interacts with RBP4. Post-translationally, sulfonation of the reactive cysteine Cys-32 enhances the stability of the native conformation of TTR, avoiding misassembly of the protein leading to amyloid formation. As to expression, detected in liver.

The protein localises to the secreted. Its function is as follows. Thyroid hormone-binding protein. Probably transports thyroxine from the bloodstream to the brain. The protein is Transthyretin (TTR) of Macropus giganteus (Eastern gray kangaroo).